We begin with the raw amino-acid sequence, 257 residues long: Hydroxyacylglutathione hydrolase (257 aa).

7 residues coordinate Zn(2+): His54, His56, Asp58, His59, His110, Asp131, and His169.

This sequence belongs to the metallo-beta-lactamase superfamily. Glyoxalase II family. In terms of assembly, monomer. Zn(2+) is required as a cofactor.

The catalysed reaction is an S-(2-hydroxyacyl)glutathione + H2O = a 2-hydroxy carboxylate + glutathione + H(+). It functions in the pathway secondary metabolite metabolism; methylglyoxal degradation; (R)-lactate from methylglyoxal: step 2/2. Functionally, thiolesterase that catalyzes the hydrolysis of S-D-lactoyl-glutathione to form glutathione and D-lactic acid. In Hahella chejuensis (strain KCTC 2396), this protein is Hydroxyacylglutathione hydrolase.